The following is a 1895-amino-acid chain: 1,3-beta-glucan synthase component GSC2 (1895 aa).

Composition is skewed to polar residues over residues 1–16 (MSYN…YSNG) and 25–34 (PTYQVTQDQS). 2 disordered regions span residues 1-143 (MSYN…PYGN) and 269-292 (ARKA…EETL). The Extracellular segment spans residues 1–473 (MSYNDPNLNG…WLHLVTNFNR (473 aa)). The span at 65 to 78 (QFPQGQDPSQDQGP) shows a compositional bias: low complexity. Composition is skewed to polar residues over residues 79-107 (YNND…SDFS) and 115-141 (TYPN…STPY). Basic residues predominate over residues 269–278 (ARKAKKKNKK). A Glycyl lysine isopeptide (Lys-Gly) (interchain with G-Cter in ubiquitin) cross-link involves residue K278. Phosphothreonine occurs at positions 288 and 291. K405 is covalently cross-linked (Glycyl lysine isopeptide (Lys-Gly) (interchain with G-Cter in ubiquitin)). A helical transmembrane segment spans residues 474-494 (IWIMHISVYWMYCAYNAPTFY). At 495-511 (THNYQQLVDNQPLAAYK) the chain is on the cytoplasmic side. A helical membrane pass occupies residues 512 to 532 (WATAALGGTVASLIQVAATLC). The Extracellular portion of the chain corresponds to 533–550 (EWSFVPRKWAGAQHLSRR). The chain crosses the membrane as a helical span at residues 551-571 (FWFLCVIMGINLGPVIFVFAY). Topologically, residues 572–582 (DKDTVYSTAAH) are cytoplasmic. Residues 583 to 603 (VVGAVMFFVAVATLVFFSVMP) traverse the membrane as a helical segment. Residues 604-1579 (LGGLFTSYMK…DASRAHRTNL (976 aa)) are Extracellular-facing. Glycyl lysine isopeptide (Lys-Gly) (interchain with G-Cter in ubiquitin) cross-links involve residues K929, K934, K1558, and K1566. The chain crosses the membrane as a helical span at residues 1580–1600 (IMAEIIPCAIYAAGCFIAFTF). The Cytoplasmic portion of the chain corresponds to 1601–1620 (INAQTGVKTTDEDRVNSTLR). The chain crosses the membrane as a helical span at residues 1621–1641 (IIICTLAPIVIDIGVLFFCMG). The Extracellular portion of the chain corresponds to 1642 to 1758 (LSCCSGPLLG…LTAKVIELSE (117 aa)). A helical membrane pass occupies residues 1759–1779 (FAADFVLGHVILIFQLPVICI). Over 1780-1821 (PKIDKFHSIMLFWLKPSRQIRPPIYSLKQARLRKRMVRRYCS) the chain is Cytoplasmic. Residues 1822–1842 (LYFLVLIIFAGCIVGPAVASA) traverse the membrane as a helical segment. The Extracellular segment spans residues 1843–1895 (HVPKDLGSGLTGTFHNLVQPRNVSNNDTGSQMSTYKSHYYTHTPSLKTWSTIK).

Belongs to the glycosyltransferase 48 family. As to quaternary structure, component of the 1,3-beta-glucan synthase (GS) complex, composed of two alternate catalytic subunits FKS1 or GSC2, and a regulatory subunit RHO1. Interacts with SMK1.

It localises to the membrane. The enzyme catalyses [(1-&gt;3)-beta-D-glucosyl](n) + UDP-alpha-D-glucose = [(1-&gt;3)-beta-D-glucosyl](n+1) + UDP + H(+). In terms of biological role, alternate catalytic subunit of the 1,3-beta-glucan synthase (GS) complex. Synthesizes 1,3-beta-glucan, a major structural component of the yeast cell wall. Required for spore wall assembly. Negative regulation of activity by SMK1 is important for spore wall deposition. Activity is positively regulated by RHO1. This is 1,3-beta-glucan synthase component GSC2 from Saccharomyces cerevisiae (strain ATCC 204508 / S288c) (Baker's yeast).